The sequence spans 505 residues: Catalase (505 aa).

The interval Met-1–Ala-25 is disordered. Residues His-56 and Asn-129 contribute to the active site. Tyr-339 serves as a coordination point for heme.

It belongs to the catalase family. Homodimer. The cofactor is heme.

The enzyme catalyses 2 H2O2 = O2 + 2 H2O. In terms of biological role, decomposes hydrogen peroxide into water and oxygen; serves to protect cells from the toxic effects of hydrogen peroxide. The polypeptide is Catalase (katA) (Staphylococcus aureus).